The chain runs to 543 residues: Acrosin-binding protein (543 aa).

The signal sequence occupies residues 1–25 (MRKPAAGFLPSLLKVLLLPLAPAAA). The interval 26–106 (QDSTQASTPG…ASWFESFCQF (81 aa)) is pro-ACR binding. A propeptide spans 26–273 (QDSTQASTPG…NPSSFAPRVR (248 aa)) (removed in mature form). The disordered stretch occupies residues 185-272 (SLGGQEQAPE…SNPSSFAPRV (88 aa)). The segment covering 192 to 220 (APEHKQEQGVEHRQEPTQEHKQEEGQKQE) has biased composition (basic and acidic residues). A compositionally biased stretch (acidic residues) spans 221–231 (EQEEEQEEEGK). The span at 232–243 (QEEGQGTKEGRE) shows a compositional bias: basic and acidic residues. The segment at 319–427 (LPHTEALLVL…NQVGSPESGR (109 aa)) is pro-ACR binding.

Binds proacrosin (pro-ACR). Does not bind the mature form of ACR. In terms of processing, phosphorylated on Tyr residues in capacitated sperm. Post-translationally, the N-terminus is blocked. Synthesized as a 60-kDa precursor, the 32-kDa mature form is post-translationally produced by the removal of the N-terminal half of the precursor during sperm maturation in the testis and/or epididymis. In terms of tissue distribution, expression restricted to testis in normal tissue. Expressed in a wide spectrum of cancers, including bladder, breast, liver, lung and colon cancers.

The protein localises to the secreted. It localises to the cytoplasmic vesicle. Its subcellular location is the secretory vesicle. The protein resides in the acrosome. Functionally, acrosomal protein that maintains proacrosin (pro-ACR) as an enzymatically inactive zymogen in the acrosome. Involved also in the acrosome formation. In Homo sapiens (Human), this protein is Acrosin-binding protein.